Consider the following 185-residue polypeptide: Capsid protein (185 aa).

The disordered stretch occupies residues 136-185 (NAPILSTLPETTVVRRRDRGRSPRRRTPSPRRRRSQSPRRRRSQSRESQC). Basic residues predominate over residues 149 to 178 (VRRRDRGRSPRRRTPSPRRRRSQSPRRRRS). A phosphoserine; by host mark is found at S157, S164, and S172. A 1; half-length repeat occupies 157-163 (SPRRRTP). The 3 X 8 AA repeats of S-P-R-R-R-[PR]-S-Q stretch occupies residues 157–179 (SPRRRTPSPRRRRSQSPRRRRSQ). The Bipartite nuclear localization signal signature appears at 160–177 (RRTPSPRRRRSQSPRRRR). A run of 2 repeats spans residues 164-171 (SPRRRRSQ) and 172-179 (SPRRRRSQ). An RNA binding region spans residues 179 to 185 (QSRESQC).

Belongs to the orthohepadnavirus core antigen family. As to quaternary structure, homodimerizes, then multimerizes. Interacts with cytosol exposed regions of viral L glycoprotein present in the reticulum-to-Golgi compartment. Interacts with human FLNB. Phosphorylated form interacts with host importin alpha; this interaction depends on the exposure of the NLS, which itself depends upon genome maturation and/or phosphorylation of the capsid protein. Interacts with host NUP153. Post-translationally, phosphorylated by host SRPK1, SRPK2, and maybe protein kinase C or GAPDH. Phosphorylation is critical for pregenomic RNA packaging. Protein kinase C phosphorylation is stimulated by HBx protein and may play a role in transport of the viral genome to the nucleus at the late step during the viral replication cycle.

Its subcellular location is the virion. The protein localises to the host cytoplasm. Self assembles to form an icosahedral capsid. Most capsids appear to be large particles with an icosahedral symmetry of T=4 and consist of 240 copies of capsid protein, though a fraction forms smaller T=3 particles consisting of 180 capsid proteins. Entering capsids are transported along microtubules to the nucleus. Phosphorylation of the capsid is thought to induce exposure of nuclear localization signal in the C-terminal portion of the capsid protein that allows binding to the nuclear pore complex via the importin (karyopherin-) alpha and beta. Capsids are imported in intact form through the nuclear pore into the nuclear basket, where it probably binds NUP153. Only capsids that contain the mature viral genome can release the viral DNA and capsid protein into the nucleoplasm. Immature capsids get stuck in the basket. Capsids encapsulate the pre-genomic RNA and the P protein. Pre-genomic RNA is reverse-transcribed into DNA while the capsid is still in the cytoplasm. The capsid can then either be directed to the nucleus, providing more genomes for transcription, or bud through the endoplasmic reticulum to provide new virions. In Hepatitis B virus genotype A1 subtype adw (isolate Philippines/pFDW294/1988) (HBV-A), this protein is Capsid protein.